The sequence spans 236 residues: Ribitol-5-phosphate cytidylyltransferase (236 aa).

CTP-binding positions include 7 to 10 and 80 to 86; these read LAGG and GTDRNET.

It belongs to the IspD/TarI cytidylyltransferase family. TarI subfamily.

It carries out the reaction D-ribitol 5-phosphate + CTP + H(+) = CDP-L-ribitol + diphosphate. It functions in the pathway cell wall biogenesis; poly(ribitol phosphate) teichoic acid biosynthesis. In terms of biological role, catalyzes the transfer of the cytidylyl group of CTP to D-ribitol 5-phosphate. This chain is Ribitol-5-phosphate cytidylyltransferase, found in Listeria monocytogenes serovar 1/2a (strain ATCC BAA-679 / EGD-e).